The sequence spans 365 residues: Prostaglandin E2 receptor EP3 subtype (365 aa).

The Extracellular portion of the chain corresponds to 1-30 (MAGVWAPEHSVEAHSNQSSAADGCGSVSVA). N16 carries N-linked (GlcNAc...) asparagine glycosylation. The helical transmembrane segment at 31–55 (FPITMMVTGFVGNALAMLLVVRSYR) threads the bilayer. Residues 56–68 (RRESKRKKSFLLC) are Cytoplasmic-facing. The helical transmembrane segment at 69-89 (IGWLALTDLVGQLLTSPVVIL) threads the bilayer. Residues 90–108 (VYLSQRRWEQLDPSGRLCT) are Extracellular-facing. C107 and C184 form a disulfide bridge. A helical membrane pass occupies residues 109-130 (FFGLTMTVFGLSSLLVASAMAV). Over 131–151 (ERALAIRAPHWYASHMKTRAT) the chain is Cytoplasmic. A helical transmembrane segment spans residues 152–173 (PVLLGVWLSVLAFALLPVLGVG). The Extracellular portion of the chain corresponds to 174–203 (RYSVQWPGTWCFISTGPAGNETDSAREPGS). N-linked (GlcNAc...) asparagine glycosylation occurs at N193. The chain crosses the membrane as a helical span at residues 204-229 (VAFASAFACLGLLALVVTFACNLATI). The Cytoplasmic segment spans residues 230–259 (KALVSRCRAKAAASQSSAQWGRITTETAIQ). The chain crosses the membrane as a helical span at residues 260–283 (LMGIMCVLSVCWSPLLIMMLKMIF). Residues 284–303 (NQMSVEQCKTQMGKEKECNS) are Extracellular-facing. The chain crosses the membrane as a helical span at residues 304–325 (FLIAVRLASLNQILDPWVYLLL). The Cytoplasmic segment spans residues 326 to 365 (RKILLRKFCQIRDHTNYASSSTSLPCPGSSVLMWSDQLER).

It belongs to the G-protein coupled receptor 1 family. As to quaternary structure, interacts (via C-terminus) with MKLN1. Does not interact with MKLN1. In terms of tissue distribution, principally expressed in the tubules of the renal medulla. Specific expression is seen in medullary and cortical thick ascending limbs; lower levels are detected in cortical and inner medullary collecting ducts. Not detected significantly in the glomeruli. In the brain, expressed in all types of glial cells.

It is found in the cell membrane. In terms of biological role, receptor for prostaglandin E2 (PGE2). Required for normal development of fever in response to pyrinogens, including IL1B, prostaglandin E2 and bacterial lipopolysaccharide (LPS). Required for normal potentiation of platelet aggregation by prostaglandin E2, and thus plays a role in the regulation of blood coagulation. Required for increased HCO3(-) secretion in the duodenum in response to mucosal acidification, and thereby contributes to the protection of the mucosa against acid-induced ulceration. Not required for normal kidney function, normal urine volume and osmolality. Functionally, receptor for prostaglandin E2 (PGE2); ligand binding activates a signaling cascade via G(i) proteins that leads to the inhibition of adenylate cyclase. Its function is as follows. Receptor for prostaglandin E2 (PGE2); ligand binding can activate several distinct signaling cascades, resulting in activation or inhibition of adenylate cyclase. In Rattus norvegicus (Rat), this protein is Prostaglandin E2 receptor EP3 subtype (Ptger3).